The sequence spans 141 residues: Small ribosomal subunit protein eS17z (141 aa).

Belongs to the eukaryotic ribosomal protein eS17 family.

The polypeptide is Small ribosomal subunit protein eS17z (RPS17A) (Arabidopsis thaliana (Mouse-ear cress)).